A 154-amino-acid polypeptide reads, in one-letter code: MGLSDQEWQQVLTIWGKVESDIAGHGHAILMRLFQDHPETLDRFEKFKGLTTPEQMKASEELKKHGVTVLTQLGKILKQKGKHEAELKPLAQTHATKHKIPVKYLEFISEVIIKVIAEKHSADFGADSQAAMKKALELFRNDMASKYKEFGFQG.

A Globin domain is found at 2–148 (GLSDQEWQQV…FRNDMASKYK (147 aa)). Histidine 65 contacts nitrite. O2 is bound at residue histidine 65. Residue histidine 94 participates in heme b binding.

Monomeric.

The protein resides in the cytoplasm. The protein localises to the sarcoplasm. It catalyses the reaction Fe(III)-heme b-[protein] + nitric oxide + H2O = Fe(II)-heme b-[protein] + nitrite + 2 H(+). It carries out the reaction H2O2 + AH2 = A + 2 H2O. In terms of biological role, monomeric heme protein which primary function is to store oxygen and facilitate its diffusion within muscle tissues. Reversibly binds oxygen through a pentacoordinated heme iron and enables its timely and efficient release as needed during periods of heightened demand. Depending on the oxidative conditions of tissues and cells, and in addition to its ability to bind oxygen, it also has a nitrite reductase activity whereby it regulates the production of bioactive nitric oxide. Under stress conditions, like hypoxia and anoxia, it also protects cells against reactive oxygen species thanks to its pseudoperoxidase activity. The protein is Myoglobin (MB) of Struthio camelus (Common ostrich).